Reading from the N-terminus, the 234-residue chain is Large ribosomal subunit protein uL1 (234 aa).

The protein belongs to the universal ribosomal protein uL1 family. In terms of assembly, part of the 50S ribosomal subunit.

In terms of biological role, binds directly to 23S rRNA. The L1 stalk is quite mobile in the ribosome, and is involved in E site tRNA release. Functionally, protein L1 is also a translational repressor protein, it controls the translation of the L11 operon by binding to its mRNA. In Salmonella arizonae (strain ATCC BAA-731 / CDC346-86 / RSK2980), this protein is Large ribosomal subunit protein uL1.